The chain runs to 360 residues: Photosystem II protein D1 3 (360 aa).

The next 3 membrane-spanning stretches (helical) occupy residues 29 to 46 (YVGWFGVLMIPTLLTATI), 118 to 133 (HFLLGIFSYMGREWEL), and 142 to 156 (WIAVAYSAPVAAATA). Residue histidine 118 participates in chlorophyll a binding. Tyrosine 126 is a pheophytin a binding site. [CaMn4O5] cluster contacts are provided by aspartate 170 and glutamate 189. A helical transmembrane segment spans residues 197 to 218 (FHMLGVAGVFGGALFSAMHGSL). Histidine 198 contributes to the chlorophyll a binding site. A quinone-binding positions include histidine 215 and 264-265 (SF). Fe cation is bound at residue histidine 215. Position 272 (histidine 272) interacts with Fe cation. A helical membrane pass occupies residues 274–288 (FLAAWPVIGIWFASL). [CaMn4O5] cluster is bound by residues histidine 332, glutamate 333, aspartate 342, and alanine 344. Positions 345–360 (AGDQAPVALQAPAING) are excised as a propeptide.

This sequence belongs to the reaction center PufL/M/PsbA/D family. PSII is composed of 1 copy each of membrane proteins PsbA, PsbB, PsbC, PsbD, PsbE, PsbF, PsbH, PsbI, PsbJ, PsbK, PsbL, PsbM, PsbT, PsbX, PsbY, PsbZ, Psb30/Ycf12, peripheral proteins PsbO, CyanoQ (PsbQ), PsbU, PsbV and a large number of cofactors. It forms dimeric complexes. Requires The D1/D2 heterodimer binds P680, chlorophylls that are the primary electron donor of PSII, and subsequent electron acceptors. It shares a non-heme iron and each subunit binds pheophytin, quinone, additional chlorophylls, carotenoids and lipids. D1 provides most of the ligands for the Mn4-Ca-O5 cluster of the oxygen-evolving complex (OEC). There is also a Cl(-1) ion associated with D1 and D2, which is required for oxygen evolution. The PSII complex binds additional chlorophylls, carotenoids and specific lipids. as cofactor. Tyr-161 forms a radical intermediate that is referred to as redox-active TyrZ, YZ or Y-Z. Post-translationally, C-terminally processed by CtpA; processing is essential to allow assembly of the oxygen-evolving complex and thus photosynthetic growth.

It is found in the cellular thylakoid membrane. The enzyme catalyses 2 a plastoquinone + 4 hnu + 2 H2O = 2 a plastoquinol + O2. Photosystem II (PSII) is a light-driven water:plastoquinone oxidoreductase that uses light energy to abstract electrons from H(2)O, generating O(2) and a proton gradient subsequently used for ATP formation. It consists of a core antenna complex that captures photons, and an electron transfer chain that converts photonic excitation into a charge separation. The D1/D2 (PsbA/PsbD) reaction center heterodimer binds P680, the primary electron donor of PSII as well as several subsequent electron acceptors. The polypeptide is Photosystem II protein D1 3 (Picosynechococcus sp. (strain ATCC 27264 / PCC 7002 / PR-6) (Agmenellum quadruplicatum)).